We begin with the raw amino-acid sequence, 550 residues long: MASARRWARKAERCCCTFATYFPLAFVYGLTSWAVWVVVNIGSVSTKSSWIGTGSSIVGVALYVMLNWCYTTAVFTPPGSTTNDMGYGLLPTQNTPQATSFTVKSNGEFRFCKKCQARKPDRAHHCSTCRRCVLKMDHHCPWLATCIGLRNHKAFLLFLIYTSLFCFWSFAVSACWVWYEALNDQEYIDSFLPVNFIMLSVISGIIGLVVGAFTSWHIHLARCGQTTIECLEKTRYLSPLRKTYNSAHNPANEVPEAARHFVDFHANALPGITRPEEGEERREMPRSYPPDGSQPVQLSYAQREREQRQRRYEEYLDEQDSEKLPNVFDLGWKRNLLHLFGPTPALWFFPVSNTTGDGWTWEASSTWLEARDRLSAEREQQRAREVNAGWGSPDDIPDIPERPTGAGKHYSPSPNLAGPKTMSKADRVLGRDPNLYADATQDVPMQRLSPRGRSIDDELADLDTDDEDGFLDANNPDKAEGGKFSPSFTSDSHRRDDAEARALEVVTNGNWGRGGASGMLRKGSSQSTPTRTPSNLSRSGTPKFQDEGVD.

Residues 1–21 are Cytoplasmic-facing; that stretch reads MASARRWARKAERCCCTFATY. Residues 22 to 42 form a helical membrane-spanning segment; that stretch reads FPLAFVYGLTSWAVWVVVNIG. The Extracellular portion of the chain corresponds to 43–56; the sequence is SVSTKSSWIGTGSS. A helical membrane pass occupies residues 57-77; sequence IVGVALYVMLNWCYTTAVFTP. At 78–153 the chain is on the cytoplasmic side; it reads PGSTTNDMGY…ATCIGLRNHK (76 aa). A DHHC domain is found at 110–160; sequence RFCKKCQARKPDRAHHCSTCRRCVLKMDHHCPWLATCIGLRNHKAFLLFLI. The helical transmembrane segment at 154 to 174 threads the bilayer; that stretch reads AFLLFLIYTSLFCFWSFAVSA. At 175-190 the chain is on the extracellular side; that stretch reads CWVWYEALNDQEYIDS. Residues 191–211 traverse the membrane as a helical segment; sequence FLPVNFIMLSVISGIIGLVVG. The Cytoplasmic portion of the chain corresponds to 212 to 550; sequence AFTSWHIHLA…TPKFQDEGVD (339 aa). Disordered stretches follow at residues 272–304, 378–422, and 434–550; these read ITRP…AQRE, REQQ…PKTM, and NLYA…EGVD. Over residues 274–285 the composition is skewed to basic and acidic residues; the sequence is RPEEGEERREMP. Acidic residues predominate over residues 457–470; it reads DELADLDTDDEDGF. Basic and acidic residues predominate over residues 491–502; it reads DSHRRDDAEARA. Positions 523–542 are enriched in polar residues; it reads GSSQSTPTRTPSNLSRSGTP.

Belongs to the DHHC palmitoyltransferase family. PFA3 subfamily. Post-translationally, autopalmitoylated.

The protein resides in the vacuole membrane. The enzyme catalyses L-cysteinyl-[protein] + hexadecanoyl-CoA = S-hexadecanoyl-L-cysteinyl-[protein] + CoA. Palmitoyltransferase specific for VAC8. Palmitoylates VAC8 at one or more of its N-terminal cysteine residues, which is required for its proper membrane localization. This Gibberella zeae (strain ATCC MYA-4620 / CBS 123657 / FGSC 9075 / NRRL 31084 / PH-1) (Wheat head blight fungus) protein is Palmitoyltransferase PFA3 (PFA3).